The following is a 21-amino-acid chain: CAPECRSFCPDQKCLKDCGCI.

Disulfide bonds link cysteine 1–cysteine 18, cysteine 5–cysteine 14, and cysteine 9–cysteine 20.

As to expression, expressed in tentacles.

The protein resides in the nematocyst. The protein localises to the secreted. Peptide of unknown function. Does not exhibit antimicrobial activity against Escherichia coli and Staphylococcus aureus. Promotes cell proliferation of human fibroblast skin cells. Does not exhibit any effect on voltage-gated ion channels, including potassium, sodium, and calcium channels. This chain is Peptide Hact-2, found in Heliofungia actiniformis (Mushroom coral).